Here is a 181-residue protein sequence, read N- to C-terminus: Adenine phosphoribosyltransferase (181 aa).

The protein belongs to the purine/pyrimidine phosphoribosyltransferase family. In terms of assembly, homodimer.

The protein resides in the cytoplasm. It carries out the reaction AMP + diphosphate = 5-phospho-alpha-D-ribose 1-diphosphate + adenine. The protein operates within purine metabolism; AMP biosynthesis via salvage pathway; AMP from adenine: step 1/1. Its function is as follows. Catalyzes a salvage reaction resulting in the formation of AMP, that is energically less costly than de novo synthesis. This Brucella anthropi (strain ATCC 49188 / DSM 6882 / CCUG 24695 / JCM 21032 / LMG 3331 / NBRC 15819 / NCTC 12168 / Alc 37) (Ochrobactrum anthropi) protein is Adenine phosphoribosyltransferase.